We begin with the raw amino-acid sequence, 341 residues long: Glyceraldehyde-3-phosphate dehydrogenase 3.1 (341 aa).

NAD(+)-binding positions include 13 to 14, aspartate 35, and arginine 85; that span reads RI. D-glyceraldehyde 3-phosphate-binding positions include 157-159, threonine 188, 217-218, and arginine 240; these read SCT and TG. The active-site Nucleophile is the cysteine 158. Asparagine 322 serves as a coordination point for NAD(+).

The protein belongs to the glyceraldehyde-3-phosphate dehydrogenase family. Homotetramer.

The protein resides in the cytoplasm. It catalyses the reaction D-glyceraldehyde 3-phosphate + phosphate + NAD(+) = (2R)-3-phospho-glyceroyl phosphate + NADH + H(+). It functions in the pathway carbohydrate degradation; glycolysis; pyruvate from D-glyceraldehyde 3-phosphate: step 1/5. In Caenorhabditis briggsae, this protein is Glyceraldehyde-3-phosphate dehydrogenase 3.1.